A 236-amino-acid chain; its full sequence is Small ribosomal subunit protein uS2c (236 aa).

The protein belongs to the universal ribosomal protein uS2 family.

It localises to the plastid. Its subcellular location is the chloroplast. This is Small ribosomal subunit protein uS2c (rps2) from Cucumis sativus (Cucumber).